Reading from the N-terminus, the 252-residue chain is Protein AGAMOUS-LIKE 6 (252 aa).

Positions 1–61 (MGRGRVELKR…GKLYEFGSAG (61 aa)) constitute an MADS-box domain. 2 consecutive short sequence motifs (nuclear localization signal) follow at residues 8–15 (LKRIENKI) and 138–145 (QRKTQIMM). Positions 85 to 175 (TQSWYQEVSK…KIKVSLELSS (91 aa)) constitute a K-box domain.

Restricted to flowers.

It localises to the nucleus. Probable transcription factor involved in fruit development. Key regulator of the transition between the state of 'ovary arrest' imposed towards anthesis and the fertilization-triggered fruit set. The sequence is that of Protein AGAMOUS-LIKE 6 from Solanum lycopersicum (Tomato).